Reading from the N-terminus, the 528-residue chain is Protein MGF 505-7R (528 aa).

It belongs to the asfivirus MGF 505 family. In terms of assembly, interacts with host STING1. Interacts with host JAK1; this interaction leads to JAK1 degradation. Interacts with host JAK2; this interaction leads to JAK2 degradation. Interacts with host RELA; this interaction inhibits NF-kappa-B promoter activity.

The protein resides in the host cytoplasm. Functionally, plays a role in virus cell tropism, and may be required for efficient virus replication in macrophages. Interferes with host NF-kappa-B promoter activity mediated by TLR8. Mechanistically, inhibits the phosphorylation and subsequent nuclear translocation of host NF-kappa-B RELA subunit downstream of TLR8. Promotes the expression of the autophagy-related protein host ULK1 to degrade host STING and inhibit the interferon response. Also inhibits JAK1- and JAK2-mediated signaling and thus negatively regulates the IFN-gamma signaling. The polypeptide is Protein MGF 505-7R (African swine fever virus (isolate Pig/Kenya/KEN-50/1950) (ASFV)).